The primary structure comprises 61 residues: Large ribosomal subunit protein bL28 (61 aa).

Residues 1–26 (MAKDYVTGKRTHFGNTRSHALNHSRR) form a disordered region.

It belongs to the bacterial ribosomal protein bL28 family.

The sequence is that of Large ribosomal subunit protein bL28 from Lactiplantibacillus plantarum (strain ATCC BAA-793 / NCIMB 8826 / WCFS1) (Lactobacillus plantarum).